Here is a 562-residue protein sequence, read N- to C-terminus: Scaffold protein FimL (562 aa).

In terms of assembly, interacts with PilG and FimV.

It is found in the cytoplasm. Functionally, regulates multiple virulence functions including type IV pilus (T4P)-mediated assembly and twitching motility as well as cAMP-dependent virulence gene expression. Regulates intracellular cyclic AMP (cAMP) levels through the activation of adenylate cyclase CyaB. Also functions as a scaffold linking FimV and PilG at the pole, where type IV pilus (T4P), the Chp chemosensory system and the CyaB adenylate cyclase interact. This is Scaffold protein FimL (fimL) from Pseudomonas aeruginosa (strain ATCC 15692 / DSM 22644 / CIP 104116 / JCM 14847 / LMG 12228 / 1C / PRS 101 / PAO1).